The sequence spans 305 residues: MDFIKKYLYVCDHPGFFELTQETFQNRWFPAQINLSVDVKCLSLMSEADVNFYKYLFTFLGMAETLVNFNIDELLVDFECHDIKHYYCEQMAMECVHGKVYFNILNMLFKNNLAATWEFAEAVLKDEALQKKLEWLESKIKMAKTKAEKVLIFYLIEGVFFISSFYCIGLLRVKGVMPGVCMANDYISRDELLHTRAAALLYNTMIPKEERPSSEWVVSLFKEAVEIECAFIEAKTKQVTFVSMDDIRAFLEATADRLLNSIELPRYYKSDPPQSCPLTYTGCIKNVSFFERESTEYSSFIINDL.

The Fe cation site is built by Glu64, Glu94, and His97. The active site involves Tyr101. A helical transmembrane segment spans residues 150–170 (VLIFYLIEGVFFISSFYCIGL). 3 residues coordinate Fe cation: Glu157, Glu191, and His194.

Belongs to the ribonucleoside diphosphate reductase small chain family. In terms of assembly, heterotetramer composed of a homodimer of the large subunit (R1) and a homodimer of the small subunit (R2). Larger multisubunit protein complex are also active, composed of (R1)n(R2)n. Fe cation serves as cofactor.

It localises to the host membrane. The enzyme catalyses a 2'-deoxyribonucleoside 5'-diphosphate + [thioredoxin]-disulfide + H2O = a ribonucleoside 5'-diphosphate + [thioredoxin]-dithiol. Its function is as follows. Ribonucleoside-diphosphate reductase holoenzyme provides the precursors necessary for viral DNA synthesis. Allows virus growth in non-dividing cells, as well as reactivation from latency in infected hosts. Catalyzes the biosynthesis of deoxyribonucleotides from the corresponding ribonucleotides. This chain is Ribonucleoside-diphosphate reductase small subunit, found in Alcelaphine herpesvirus 1 (strain C500) (AlHV-1).